The primary structure comprises 85 residues: Small ribosomal subunit protein bS20 (85 aa).

It belongs to the bacterial ribosomal protein bS20 family.

Its function is as follows. Binds directly to 16S ribosomal RNA. This chain is Small ribosomal subunit protein bS20, found in Cytophaga hutchinsonii (strain ATCC 33406 / DSM 1761 / CIP 103989 / NBRC 15051 / NCIMB 9469 / D465).